Here is a 252-residue protein sequence, read N- to C-terminus: Phosphonates import ATP-binding protein PhnC 1 (252 aa).

Positions 2 to 244 constitute an ABC transporter domain; the sequence is ISLNKLGVTY…QLEEIYQTLS (243 aa). 35–42 lines the ATP pocket; the sequence is GSSGAGKS.

The protein belongs to the ABC transporter superfamily. Phosphonates importer (TC 3.A.1.9.1) family. The complex is composed of two ATP-binding proteins (PhnC), two transmembrane proteins (PhnE) and a solute-binding protein (PhnD).

It localises to the cell inner membrane. It catalyses the reaction phosphonate(out) + ATP + H2O = phosphonate(in) + ADP + phosphate + H(+). In terms of biological role, part of the ABC transporter complex PhnCDE involved in phosphonates import. Responsible for energy coupling to the transport system. The protein is Phosphonates import ATP-binding protein PhnC 1 of Trichodesmium erythraeum (strain IMS101).